A 348-amino-acid polypeptide reads, in one-letter code: Dihydroorotase (348 aa).

Histidine 17 and histidine 19 together coordinate Zn(2+). Residues 19 to 21 (HLR) and asparagine 45 each bind substrate. Positions 103, 140, and 178 each coordinate Zn(2+). Lysine 103 carries the post-translational modification N6-carboxylysine. Histidine 140 serves as a coordination point for substrate. Leucine 223 contributes to the substrate binding site. A Zn(2+)-binding site is contributed by aspartate 251. Residue aspartate 251 is part of the active site. Residues histidine 255 and alanine 267 each contribute to the substrate site.

It belongs to the metallo-dependent hydrolases superfamily. DHOase family. Class II DHOase subfamily. In terms of assembly, homodimer. Zn(2+) is required as a cofactor.

The catalysed reaction is (S)-dihydroorotate + H2O = N-carbamoyl-L-aspartate + H(+). The protein operates within pyrimidine metabolism; UMP biosynthesis via de novo pathway; (S)-dihydroorotate from bicarbonate: step 3/3. Its function is as follows. Catalyzes the reversible cyclization of carbamoyl aspartate to dihydroorotate. The protein is Dihydroorotase of Escherichia coli O7:K1 (strain IAI39 / ExPEC).